The primary structure comprises 583 residues: Glucosidase 2 subunit beta (583 aa).

Residues 1-26 (MVRLNLAVVALAAGALSASASASSSA) form the signal peptide. Cys-91 and Cys-115 are disulfide-bonded. A coiled-coil region spans residues 130–252 (NRCEKVGKEY…LTLLLDDLAK (123 aa)). The region spanning 455 to 562 (NKCFSKDMGE…KVATPAVCFP (108 aa)) is the MRH domain. 3 cysteine pairs are disulfide-bonded: Cys-457–Cys-470, Cys-519–Cys-548, and Cys-533–Cys-560. The short motif at 580–583 (KDEL) is the Prevents secretion from ER element.

As to quaternary structure, heterodimer of a catalytic subunit alpha and a subunit beta.

The protein resides in the endoplasmic reticulum. Its function is as follows. Subunit of glucosidase 2, which cleaves sequentially the 2 innermost alpha-1,3-linked glucose residues from the Glc(2)Man(9)GlcNAc(2) oligosaccharide precursor of immature glycoproteins in the endoplasmic reticulum (ER). Specifically required for the cleavage of the final glucose. The subunit beta retains the catalytic subunit alpha in the ER. The chain is Glucosidase 2 subunit beta from Mycosarcoma maydis (Corn smut fungus).